Consider the following 199-residue polypeptide: Sulfocyanin (199 aa).

The helical; Signal-anchor for type II membrane protein transmembrane segment at 7 to 27 (VLPVVVGILVVIIAVAVGVYV) threads the bilayer. In terms of domain architecture, Plastocyanin-like spans 79–188 (NFNGTSSGSL…SGMWAVLVAS (110 aa)). Cu cation is bound by residues H110, C171, H176, and M181.

Belongs to the multicopper oxidase family.

It localises to the cell membrane. Its function is as follows. The 4 redox proteins SoxE, SoxF, SoxG and SoxH probably form part of a membrane respiratory complex together with SoxM, a catalytic subunit of cytochrome oxidase. The sequence is that of Sulfocyanin (soxE) from Sulfolobus acidocaldarius (strain ATCC 33909 / DSM 639 / JCM 8929 / NBRC 15157 / NCIMB 11770).